Consider the following 459-residue polypeptide: tRNA modification GTPase MnmE (459 aa).

(6S)-5-formyl-5,6,7,8-tetrahydrofolate is bound by residues arginine 24, glutamate 82, and lysine 122. The 161-residue stretch at 219–379 folds into the TrmE-type G domain; that stretch reads GIKVVISGAP…LRQHLYFSFK (161 aa). GTP is bound by residues 229-234, 248-254, and 273-276; these read NSGKSS, TNFPGTT, and DTAG. Residues serine 233 and threonine 254 each coordinate Mg(2+). Lysine 459 serves as a coordination point for (6S)-5-formyl-5,6,7,8-tetrahydrofolate.

Belongs to the TRAFAC class TrmE-Era-EngA-EngB-Septin-like GTPase superfamily. TrmE GTPase family. In terms of assembly, homodimer. Heterotetramer of two MnmE and two MnmG subunits. K(+) serves as cofactor.

The protein resides in the cytoplasm. Functionally, exhibits a very high intrinsic GTPase hydrolysis rate. Involved in the addition of a carboxymethylaminomethyl (cmnm) group at the wobble position (U34) of certain tRNAs, forming tRNA-cmnm(5)s(2)U34. This Buchnera aphidicola subsp. Baizongia pistaciae (strain Bp) protein is tRNA modification GTPase MnmE.